Consider the following 373-residue polypeptide: Chorismate synthase (373 aa).

Arg-46 contributes to the NADP(+) binding site. FMN-binding positions include 123 to 125 (RSS), 251 to 252 (NA), Gly-295, 310 to 314 (KPTPS), and Arg-337.

Belongs to the chorismate synthase family. The cofactor is FMNH2.

The enzyme catalyses 5-O-(1-carboxyvinyl)-3-phosphoshikimate = chorismate + phosphate. The protein operates within metabolic intermediate biosynthesis; chorismate biosynthesis; chorismate from D-erythrose 4-phosphate and phosphoenolpyruvate: step 7/7. Catalyzes the anti-1,4-elimination of the C-3 phosphate and the C-6 proR hydrogen from 5-enolpyruvylshikimate-3-phosphate (EPSP) to yield chorismate, which is the branch point compound that serves as the starting substrate for the three terminal pathways of aromatic amino acid biosynthesis. This reaction introduces a second double bond into the aromatic ring system. In Methanococcus maripaludis (strain DSM 14266 / JCM 13030 / NBRC 101832 / S2 / LL), this protein is Chorismate synthase.